A 430-amino-acid polypeptide reads, in one-letter code: Tyrosine--tRNA ligase (430 aa).

Tyr-32 contributes to the L-tyrosine binding site. Positions 37–46 match the 'HIGH' region motif; it reads PTADSLHIGH. L-tyrosine-binding residues include Tyr-172 and Gln-176. The 'KMSKS' region signature appears at 232–236; sequence KFGKT. Lys-235 is an ATP binding site. Residues 362–430 enclose the S4 RNA-binding domain; the sequence is ISLVDLLADA…KKSYYLIIVE (69 aa).

Belongs to the class-I aminoacyl-tRNA synthetase family. TyrS type 1 subfamily. Homodimer.

The protein resides in the cytoplasm. It carries out the reaction tRNA(Tyr) + L-tyrosine + ATP = L-tyrosyl-tRNA(Tyr) + AMP + diphosphate + H(+). Its function is as follows. Catalyzes the attachment of tyrosine to tRNA(Tyr) in a two-step reaction: tyrosine is first activated by ATP to form Tyr-AMP and then transferred to the acceptor end of tRNA(Tyr). The chain is Tyrosine--tRNA ligase from Porphyromonas gingivalis (strain ATCC BAA-308 / W83).